The chain runs to 128 residues: MAAAMETDEQQRIRFQLELEFVQCLANPNYLNFLAQRGYFKDKSFVNYLKYLLYWKDPEYAKYLKYPQCLHMLELLQYEHFRKELVNAQCAKFIDEQQILHWQHYSRKRMRMQQALAEQQQQNNTSGK.

It belongs to the Mediator complex subunit 31 family. Component of the Mediator complex.

It is found in the nucleus. Functionally, component of the Mediator complex, a coactivator involved in the regulated transcription of nearly all RNA polymerase II-dependent genes. Mediator functions as a bridge to convey information from gene-specific regulatory proteins to the basal RNA polymerase II transcription machinery. Mediator is recruited to promoters by direct interactions with regulatory proteins and serves as a scaffold for the assembly of a functional preinitiation complex with RNA polymerase II and the general transcription factors. In Xenopus tropicalis (Western clawed frog), this protein is Mediator of RNA polymerase II transcription subunit 31 (med31).